The following is a 340-amino-acid chain: Zinc finger protein 367 (340 aa).

Residues 101–140 (GAPQSSASVAAVSGGEDEEEASSPDSGHLKDGIRRGRPRA) form a disordered region. Residues 127 to 140 (GHLKDGIRRGRPRA) are compositionally biased toward basic and acidic residues. 2 consecutive C2H2-type zinc fingers follow at residues 157-179 (IRCN…KRTH) and 185-209 (YLCD…QRLH). Residues 280–317 (KGKLVQKADQEQQDPLEYLQSDEEDDEKSGAQRRLQEQ) are disordered. A coiled-coil region spans residues 299–332 (QSDEEDDEKSGAQRRLQEQRERLHGALALIELAN). Serine 300 is subject to Phosphoserine. A compositionally biased stretch (basic and acidic residues) spans 307–317 (KSGAQRRLQEQ).

This sequence belongs to the krueppel C2H2-type zinc-finger protein family. As to expression, expressed in bone marrow and ovary.

Its subcellular location is the nucleus. Transcriptional activator. Isoform 1 may be involved in transcriptional activation of erythroid genes. In Mus musculus (Mouse), this protein is Zinc finger protein 367 (Znf367).